We begin with the raw amino-acid sequence, 564 residues long: Phenylalanine--tRNA ligase beta subunit (564 aa).

Residues Y286–S362 form the B5 domain. Mg(2+) is bound by residues D340, D346, E349, and E350.

This sequence belongs to the phenylalanyl-tRNA synthetase beta subunit family. Type 2 subfamily. In terms of assembly, tetramer of two alpha and two beta subunits. Requires Mg(2+) as cofactor.

It is found in the cytoplasm. The enzyme catalyses tRNA(Phe) + L-phenylalanine + ATP = L-phenylalanyl-tRNA(Phe) + AMP + diphosphate + H(+). The polypeptide is Phenylalanine--tRNA ligase beta subunit (Borrelia recurrentis (strain A1)).